The following is a 599-amino-acid chain: MKIENIRNFSIIAHIDHGKSTLADRLLEYTGALSERERQDQFLDKMDLERERGITIKAQTVRLNYRADDGKDYVLNLIDTPGHVDFTYEVSRSLAACEGGLLVVDASQGVEAQTLANVYLAIDNNLEVFPVLNKIDLPAAEPERVKHEIEEIIGLDAHDAVLASAKEGIGTREILEEIVKKIPPPEGDPAAPLKALLFDSWYDQYQGVIILARLIDGILKKGDKIQLVSTGRSYEALKVGVFAPVMREVPQLSAGEVGFVIAGIKDVADAKIGDTVTHTLKPCTTPLGGFKEVKPMVFSGLYPIDTSQYEQLRDALAKLKLNDSSFSYEPETSLALGFGFRCGFLGLLHMEIIQERLEREFNLDLITTAPTVVYRVHRIKGDMISIESANQLPPTQEIDYVEEPFILASIHTPNEFVGGILALCEEKRGVQREIKYLTPTRVMIIYELPLNEVVLDFYDRLKSITKGYASLDYEHLDYRRSELVRMNIMINGEVVDALSLIIHRDKAYYRGRDLVSKMKELIPRQMFEVAIQAAIGAKVIARETVKALRKDVLAKCYGGDITRKRKLLEKQKEGKKRMKNVGNVELPQEAFLAILKVEE.

Residues 4-186 (ENIRNFSIIA…EIVKKIPPPE (183 aa)) form the tr-type G domain. Residues 16 to 21 (DHGKST) and 133 to 136 (NKID) contribute to the GTP site.

Belongs to the TRAFAC class translation factor GTPase superfamily. Classic translation factor GTPase family. LepA subfamily.

The protein localises to the cell inner membrane. The enzyme catalyses GTP + H2O = GDP + phosphate + H(+). Required for accurate and efficient protein synthesis under certain stress conditions. May act as a fidelity factor of the translation reaction, by catalyzing a one-codon backward translocation of tRNAs on improperly translocated ribosomes. Back-translocation proceeds from a post-translocation (POST) complex to a pre-translocation (PRE) complex, thus giving elongation factor G a second chance to translocate the tRNAs correctly. Binds to ribosomes in a GTP-dependent manner. The protein is Elongation factor 4 of Geobacter metallireducens (strain ATCC 53774 / DSM 7210 / GS-15).